The sequence spans 141 residues: 2S seed storage albumin protein (141 aa).

A signal peptide spans 1 to 22 (MARLTSIIALFAVALLVADAYA). Positions 23 to 35 (YRTTITTVEVEEN) are excised as a propeptide. 4 disulfides stabilise this stretch: Cys43/Cys97, Cys55/Cys86, Cys87/Cys132, and Cys99/Cys139.

This sequence belongs to the 2S seed storage albumins family. As to quaternary structure, the mature protein consists of a small and a large chain linked by 2 disulfide bonds.

Its subcellular location is the vacuole. It localises to the aleurone grain. This is a 2S seed storage protein. This is 2S seed storage albumin protein from Cucurbita maxima (Pumpkin).